Consider the following 629-residue polypeptide: 1-deoxy-D-xylulose-5-phosphate synthase (629 aa).

Thiamine diphosphate contacts are provided by residues His73 and 114 to 116; that span reads GHA. A Mg(2+)-binding site is contributed by Asp145. Thiamine diphosphate is bound by residues 146 to 147, Asn174, Tyr284, and Glu360; that span reads GA. Asn174 provides a ligand contact to Mg(2+).

The protein belongs to the transketolase family. DXPS subfamily. As to quaternary structure, homodimer. It depends on Mg(2+) as a cofactor. Thiamine diphosphate serves as cofactor.

It carries out the reaction D-glyceraldehyde 3-phosphate + pyruvate + H(+) = 1-deoxy-D-xylulose 5-phosphate + CO2. It functions in the pathway metabolic intermediate biosynthesis; 1-deoxy-D-xylulose 5-phosphate biosynthesis; 1-deoxy-D-xylulose 5-phosphate from D-glyceraldehyde 3-phosphate and pyruvate: step 1/1. Its function is as follows. Catalyzes the acyloin condensation reaction between C atoms 2 and 3 of pyruvate and glyceraldehyde 3-phosphate to yield 1-deoxy-D-xylulose-5-phosphate (DXP). The sequence is that of 1-deoxy-D-xylulose-5-phosphate synthase from Thermomicrobium roseum (strain ATCC 27502 / DSM 5159 / P-2).